Reading from the N-terminus, the 390-residue chain is Nucleosome assembly protein 1-like 1 (390 aa).

A compositionally biased stretch (basic and acidic residues) spans 1-10 (MADIDNKEQS). A disordered region spans residues 1-32 (MADIDNKEQSELDQDLEDVEEVEEEETGEETK). A2 bears the N-acetylalanine mark. S10 carries the phosphoserine modification. Positions 11 to 28 (ELDQDLEDVEEVEEEETG) are enriched in acidic residues. Residues T62 and T64 each carry the phosphothreonine modification. Residue S69 is modified to Phosphoserine. K116 carries the N6-acetyllysine modification. The NAP1L motif signature appears at 125–150 (YEPTEEECEWKPDEEDEVSEELKEKA). Over residues 131 to 143 (ECEWKPDEEDEVS) the composition is skewed to acidic residues. A disordered region spans residues 131–163 (ECEWKPDEEDEVSEELKEKAKIEDEKKDEEKED). S143 carries the post-translational modification Phosphoserine. Basic and acidic residues predominate over residues 144 to 163 (EELKEKAKIEDEKKDEEKED). A Nuclear localization signal motif is present at residues 272 to 278 (IKKKQKH). The segment covering 345–375 (AIEDDDDDYDEEGEEADEEGEEEGDEENDPD) has biased composition (acidic residues). The tract at residues 345–390 (AIEDDDDDYDEEGEEADEEGEEEGDEENDPDYDPKKDQNPAECKQQ) is disordered. A 5-glutamyl polyglycine mark is found at E358 and E359. The segment covering 376-390 (YDPKKDQNPAECKQQ) has biased composition (basic and acidic residues). Cysteine methyl ester is present on C387. C387 carries S-farnesyl cysteine lipidation. A propeptide spans 388–390 (KQQ) (removed in mature form).

The protein belongs to the nucleosome assembly protein (NAP) family. As to quaternary structure, homodimer. The dimer binds strongly and sequentially to single and double H2A-H2B heterodimers. Interacts with ERCC6; this interaction increases ERCC6 processivity. Interacts with RAD54. Interacts with SETD1A. Polyglycylated by TTLL10 on glutamate residues, resulting in polyglycine chains on the gamma-carboxyl group. Both polyglutamylation and polyglycylation modifications can coexist on the same protein on adjacent residues, and lowering polyglycylation levels increases polyglutamylation, and reciprocally. In terms of processing, polyglutamylated by TTLL4 on glutamate residues, resulting in polyglutamate chains on the gamma-carboxyl group. Both polyglutamylation and polyglycylation modifications can coexist on the same protein on adjacent residues, and lowering polyglycylation levels increases polyglutamylation, and reciprocally.

It is found in the nucleus. It localises to the melanosome. Its subcellular location is the cytoplasm. Histone chaperone that plays a role in the nuclear import of H2A-H2B and nucleosome assembly. Also participates in several important DNA repair mechanisms: greatly enhances ERCC6-mediated chromatin remodeling which is essential for transcription-coupled nucleotide excision DNA repair. Also stimulates homologous recombination (HR) by RAD51 and RAD54 which is essential in mitotic DNA double strand break (DSB) repair. Plays a key role in the regulation of embryonic neurogenesis. Promotes the proliferation of neural progenitors and inhibits neuronal differentiation during cortical development. Regulates neurogenesis via the modulation of RASSF10; regulates RASSF10 expression by promoting SETD1A-mediated H3K4 methylation at the RASSF10 promoter. This chain is Nucleosome assembly protein 1-like 1 (Nap1l1), found in Rattus norvegicus (Rat).